A 247-amino-acid polypeptide reads, in one-letter code: Transcription factor otaR1 (247 aa).

Disordered regions lie at residues M1–M48 and D100–N143. A compositionally biased stretch (low complexity) spans D23–S47. Residues A134–N143 are compositionally biased toward polar residues. The segment at K156–K196 is basic motif. Residues K156 to H219 enclose the bZIP domain. Residues L198 to L212 are leucine-zipper.

It localises to the nucleus. Transcription factor; part of the gene cluster that mediates the biosynthesis of ochratoxin A (OTA), a mycotoxin demonstrated to have nephrotoxic, immunotoxic, genotoxic, neurotoxic, and teratogenic properties. Positively regulates the expression of the cluster genes otaA, otaB, otaC and otaD, and the subsequent production of OTA. The polypeptide is Transcription factor otaR1 (Aspergillus carbonarius (strain ITEM 5010)).